Here is a 761-residue protein sequence, read N- to C-terminus: Neurotrypsin (761 aa).

The first 21 residues, 1 to 21 (MALARCVLAVILGVLSEVARA), serve as a signal peptide directing secretion. Residues 26–88 (HSPLHRPHPS…PTISRRCGAG (63 aa)) form a disordered region. The segment covering 54–63 (TPRFPLPPRA) has biased composition (pro residues). In terms of domain architecture, Kringle spans 85 to 157 (CGAGEPWGNA…GKVDWGYCDC (73 aa)). Cystine bridges form between C85/C157, C101/C141, C130/C155, C191/C255, C204/C265, C235/C245, C298/C361, C311/C371, C341/C351, C411/C475, C424/C485, C455/C465, C505/C636, C547/C563, C651/C717, C680/C694, and C707/C736. A glycan (N-linked (GlcNAc...) asparagine) is linked at N93. SRCR domains lie at 166–267 (IRLV…SCAP), 273–373 (IRLS…TCYP), and 386–487 (IRLM…ICDY). Residues 505–516 (CGLRLLHRRQKR) are zymogen activation region. The 244-residue stretch at 517 to 760 (IIGGNNSLRG…FVPWIKSVTS (244 aa)) folds into the Peptidase S1 domain. N-linked (GlcNAc...) asparagine glycosylation occurs at N521. The active-site Charge relay system is H562. N569 is a glycosylation site (N-linked (GlcNAc...) asparagine). D612 (charge relay system) is an active-site residue. Residue S711 is the Charge relay system of the active site.

It belongs to the peptidase S1 family.

Its subcellular location is the secreted. Functionally, plays a role in neuronal plasticity and the proteolytic action may subserve structural reorganizations associated with learning and memory operations. The polypeptide is Neurotrypsin (Prss12) (Rattus norvegicus (Rat)).